The chain runs to 268 residues: MGLVVVGAGGRMGQTLIRTIQSIEGAKLVGAIERSGSPFLGKDAGEVTGIGTLGVAITDDPLPVFAKAHGVLDFTSPAASVEFAGLAAQARIVHVIGTTGCSAEDDEKIRAAARHATIVKSGNMSLGVNLLSVLVQKAAEALGPEDFDIEILEMHHRHKVDAPSGTALLLGEAAARGRDIALADNSVRVRDGYTGPRETGAIGFATLRGGSVIGDHSVILAGTGERVVLSHHAEDRSIFARGAIKAALWAHGKKPGLYSMLDVLGLNT.

NAD(+) is bound by residues 7 to 12 (GAGGRM) and Glu33. Arg34 contributes to the NADP(+) binding site. Residues 97 to 99 (GTT) and 121 to 124 (SGNM) contribute to the NAD(+) site. The active-site Proton donor/acceptor is His155. His156 is a (S)-2,3,4,5-tetrahydrodipicolinate binding site. Lys159 (proton donor) is an active-site residue. A (S)-2,3,4,5-tetrahydrodipicolinate-binding site is contributed by 165 to 166 (GT).

This sequence belongs to the DapB family.

It localises to the cytoplasm. The catalysed reaction is (S)-2,3,4,5-tetrahydrodipicolinate + NAD(+) + H2O = (2S,4S)-4-hydroxy-2,3,4,5-tetrahydrodipicolinate + NADH + H(+). It carries out the reaction (S)-2,3,4,5-tetrahydrodipicolinate + NADP(+) + H2O = (2S,4S)-4-hydroxy-2,3,4,5-tetrahydrodipicolinate + NADPH + H(+). Its pathway is amino-acid biosynthesis; L-lysine biosynthesis via DAP pathway; (S)-tetrahydrodipicolinate from L-aspartate: step 4/4. Its function is as follows. Catalyzes the conversion of 4-hydroxy-tetrahydrodipicolinate (HTPA) to tetrahydrodipicolinate. The polypeptide is 4-hydroxy-tetrahydrodipicolinate reductase (Brucella abortus (strain 2308)).